The chain runs to 206 residues: Ion-translocating oxidoreductase complex subunit G (206 aa).

Residues 9–29 (GITLALFAAGSTGLTAAINQM) traverse the membrane as a helical segment. Threonine 174 bears the FMN phosphoryl threonine mark.

It belongs to the RnfG family. As to quaternary structure, the complex is composed of six subunits: RsxA, RsxB, RsxC, RsxD, RsxE and RsxG. FMN serves as cofactor.

The protein localises to the cell inner membrane. In terms of biological role, part of a membrane-bound complex that couples electron transfer with translocation of ions across the membrane. Required to maintain the reduced state of SoxR. The protein is Ion-translocating oxidoreductase complex subunit G of Escherichia coli O157:H7.